The following is a 329-amino-acid chain: Probable CTD kinase subunit alpha homolog (329 aa).

Positions 22 to 297 (YEKIRIIGEG…VEQVVGSKYF (276 aa)) constitute a Protein kinase domain. ATP contacts are provided by residues 28-36 (IGEGTFGQV) and Lys49. The Proton acceptor role is filled by Asp139.

This sequence belongs to the protein kinase superfamily. CMGC Ser/Thr protein kinase family. CDC2/CDKX subfamily. In terms of assembly, component of the CTDK-I complex.

The protein localises to the nucleus. The protein resides in the nucleolus. The catalysed reaction is [DNA-directed RNA polymerase] + ATP = phospho-[DNA-directed RNA polymerase] + ADP + H(+). Functionally, catalytic subunit of the CTDK-I complex, which hyperphosphorylates the C-terminal heptapeptide repeat domain (CTD) of the largest RNA polymerase II subunit. Involved in RNA polymerase II transcriptional elongation and pre-mRNA 3'-end processing. The protein is Probable CTD kinase subunit alpha homolog (CTK1) of Encephalitozoon cuniculi (strain GB-M1) (Microsporidian parasite).